We begin with the raw amino-acid sequence, 533 residues long: Putative replication factor C large subunit (533 aa).

Positions 1 to 11 (MSKTAKNTKTI) are enriched in polar residues. The segment at 1–31 (MSKTAKNTKTIKSVKSVNKDNKPNKDNKDDK) is disordered. Over residues 17–31 (VNKDNKPNKDNKDDK) the composition is skewed to basic and acidic residues.

The protein belongs to the activator 1 large subunit family.

In terms of biological role, part of the RFC clamp loader complex which loads the PCNA sliding clamp onto DNA. The polypeptide is Putative replication factor C large subunit (Acanthamoeba polyphaga (Amoeba)).